The primary structure comprises 129 residues: Azurin-1 (129 aa).

The Plastocyanin-like domain occupies 1–129 (AECSVDIAGN…LMKGVLKLVD (129 aa)). A disulfide bridge links C3 with C26. Residues H46, C112, H117, and M121 each contribute to the Cu cation site.

The protein resides in the periplasm. Transfers electrons from cytochrome c551 to cytochrome oxidase. In Alcaligenes xylosoxydans xylosoxydans (Achromobacter xylosoxidans), this protein is Azurin-1.